The following is a 552-amino-acid chain: Urocanate hydratase (552 aa).

NAD(+)-binding positions include 49-50 (GG), Q127, 173-175 (GMG), E193, R198, 239-240 (NA), 260-264 (QTSAH), 270-271 (YV), and Y319. Residue C407 is part of the active site. G489 provides a ligand contact to NAD(+).

This sequence belongs to the urocanase family. As to quaternary structure, composed of at least two subunits. It depends on NAD(+) as a cofactor.

It localises to the cytoplasm. It catalyses the reaction 4-imidazolone-5-propanoate = trans-urocanate + H2O. Its pathway is amino-acid degradation; L-histidine degradation into L-glutamate; N-formimidoyl-L-glutamate from L-histidine: step 2/3. Catalyzes the conversion of urocanate to 4-imidazolone-5-propionate. The chain is Urocanate hydratase from Bacillus subtilis (strain 168).